The sequence spans 192 residues: Ion-translocating oxidoreductase complex subunit A (192 aa).

The next 6 helical transmembrane spans lie at Leu-5–Leu-25, Ala-38–Leu-58, Leu-72–Val-92, Ala-102–Leu-122, Ala-134–Met-154, and Ala-171–Ile-191.

The protein belongs to the NqrDE/RnfAE family. As to quaternary structure, the complex is composed of six subunits: RnfA, RnfB, RnfC, RnfD, RnfE and RnfG.

It is found in the cell inner membrane. Its function is as follows. Part of a membrane-bound complex that couples electron transfer with translocation of ions across the membrane. The protein is Ion-translocating oxidoreductase complex subunit A of Shewanella denitrificans (strain OS217 / ATCC BAA-1090 / DSM 15013).